Reading from the N-terminus, the 119-residue chain is Autophagy-related protein 8c (119 aa).

Gly117 carries Phosphatidylethanolamine amidated glycine lipidation. Positions 118-119 (LV) are cleaved as a propeptide — removed in mature form.

The protein belongs to the ATG8 family. Interacts with ATG4. Interacts with NBR1. The C-terminal 2 residues are removed by ATG4 to expose Gly-117 at the C-terminus. This Gly-117 forms then a thioester bond with the 'Cys-558' of ATG7 (E1-like activating enzyme) before being transferred to the 'Cys-258' of ATG3 (the specific E2 conjugating enzyme), in order to be finally amidated with phosphatidylethanolamine. This lipid modification anchors ATG8 to autophagosomes. In terms of tissue distribution, constitutively expressed.

It localises to the cytoplasmic vesicle. The protein localises to the autophagosome membrane. The protein resides in the vacuole membrane. It is found in the cytoplasm. Its subcellular location is the cytoskeleton. Ubiquitin-like modifier involved in autophagosomes formation. May mediate the delivery of the autophagosomes to the vacuole via the microtubule cytoskeleton. The sequence is that of Autophagy-related protein 8c (ATG8C) from Arabidopsis thaliana (Mouse-ear cress).